We begin with the raw amino-acid sequence, 328 residues long: Methionyl-tRNA formyltransferase (328 aa).

(6S)-5,6,7,8-tetrahydrofolate is bound at residue 110–113 (SLLP).

It belongs to the Fmt family.

It catalyses the reaction L-methionyl-tRNA(fMet) + (6R)-10-formyltetrahydrofolate = N-formyl-L-methionyl-tRNA(fMet) + (6S)-5,6,7,8-tetrahydrofolate + H(+). In terms of biological role, attaches a formyl group to the free amino group of methionyl-tRNA(fMet). The formyl group appears to play a dual role in the initiator identity of N-formylmethionyl-tRNA by promoting its recognition by IF2 and preventing the misappropriation of this tRNA by the elongation apparatus. The polypeptide is Methionyl-tRNA formyltransferase (Prochlorococcus marinus (strain AS9601)).